Consider the following 349-residue polypeptide: Cytoplasmic tRNA 2-thiolation protein 2 (349 aa).

It belongs to the CTU2/NCS2 family.

It localises to the cytoplasm. It participates in tRNA modification; 5-methoxycarbonylmethyl-2-thiouridine-tRNA biosynthesis. In terms of biological role, plays a central role in 2-thiolation of mcm(5)S(2)U at tRNA wobble positions of tRNA(Lys), tRNA(Glu) and tRNA(Gln). May act by forming a heterodimer with tut-1/ctu-1 that ligates sulfur from thiocarboxylated urm-1 onto the uridine of tRNAs at wobble position. The chain is Cytoplasmic tRNA 2-thiolation protein 2 from Caenorhabditis elegans.